A 492-amino-acid chain; its full sequence is Probable folate-biopterin transporter 5 (492 aa).

12 helical membrane passes run 46-66 (VFAV…LGHV), 92-112 (ISWI…PIFG), 117-137 (PYFI…SLQS), 142-162 (YLAL…DVTI), 186-206 (LSYS…VHLV), 210-230 (GVFG…VLFS), 264-285 (LYMF…YWFT), 298-318 (VGFI…LYNL), 328-348 (LFLW…ILVL), 361-381 (FIVV…MVIF), 396-416 (FFAL…WLGG), and 433-453 (WLAV…LFLV).

Belongs to the major facilitator superfamily. Folate-biopterin transporter (TC 2.A.71) family.

It localises to the membrane. Its function is as follows. Could mediate folate transport. This is Probable folate-biopterin transporter 5 from Arabidopsis thaliana (Mouse-ear cress).